The sequence spans 52 residues: UPF0391 membrane protein Tgr7_2500 (52 aa).

Helical transmembrane passes span 4 to 24 (WALI…SGVA) and 29 to 49 (WIAQ…LLGG).

This sequence belongs to the UPF0391 family.

It is found in the cell membrane. In Thioalkalivibrio sulfidiphilus (strain HL-EbGR7), this protein is UPF0391 membrane protein Tgr7_2500.